A 71-amino-acid polypeptide reads, in one-letter code: VKRPMNAFMVWSQNERRKIMDQWPDMHNAEISKRLGRRWQLLQDSERYPLSRRRSVRLKHMADYPNYKYRP.

The segment at residues 1–68 (VKRPMNAFMV…KHMADYPNYK (68 aa)) is a DNA-binding region (HMG box).

It localises to the nucleus. The sequence is that of SRY-related protein LG27 from Eublepharis macularius (Leopard gecko).